A 407-amino-acid chain; its full sequence is Ameloblastin (407 aa).

Positions 1–26 (MSASKIPLFKMKGLILFLSLVKMSLA) are cleaved as a signal peptide. Pro42 carries the hydroxyproline modification. Position 48 is a phosphoserine (Ser48). 2 disordered regions span residues 124 to 143 (GVQV…PGQL) and 259 to 304 (QNSP…ENPA).

The protein belongs to the ameloblastin family. Ameloblast-specific.

Its subcellular location is the secreted. The protein localises to the extracellular space. It localises to the extracellular matrix. Its function is as follows. Involved in the mineralization and structural organization of enamel. The chain is Ameloblastin (Ambn) from Mus musculus (Mouse).